The primary structure comprises 572 residues: Hemagglutinin-neuraminidase (572 aa).

The Intravirion portion of the chain corresponds to 1 to 31 (MEYWKHTNHRKDAGNELETSMATHGNKLTNK). Residues 32-52 (ITYILWTIILVLLSIVLIIVL) form a helical membrane-spanning segment. At 53 to 572 (INSIKSEKAH…FKTEVPKSCS (520 aa)) the chain is on the virion surface side. Disulfide bonds link C190-C214 and C256-C269. An involved in neuraminidase activity region spans residues 252-257 (NRKSCS). 2 N-linked (GlcNAc...) asparagine; by host glycosylation sites follow: N308 and N351. Disulfide bonds link C355/C469 and C463/C473. N523 is a glycosylation site (N-linked (GlcNAc...) asparagine; by host). The cysteines at positions 535 and 544 are disulfide-linked.

This sequence belongs to the paramyxoviruses hemagglutinin-neuraminidase family. In terms of assembly, homotetramer; composed of disulfide-linked homodimers. Interacts with F protein trimer.

It is found in the virion membrane. The protein localises to the host cell membrane. The enzyme catalyses Hydrolysis of alpha-(2-&gt;3)-, alpha-(2-&gt;6)-, alpha-(2-&gt;8)- glycosidic linkages of terminal sialic acid residues in oligosaccharides, glycoproteins, glycolipids, colominic acid and synthetic substrates.. Its function is as follows. Attaches the virus to sialic acid-containing cell receptors and thereby initiating infection. Binding of HN protein to the receptor induces a conformational change that allows the F protein to trigger virion/cell membranes fusion. In terms of biological role, neuraminidase activity ensures the efficient spread of the virus by dissociating the mature virions from the neuraminic acid containing glycoproteins. This is Hemagglutinin-neuraminidase (HN) from Human parainfluenza 3 virus (strain Tex/9305/82) (HPIV-3).